The sequence spans 395 residues: Acetate kinase (395 aa).

Asn-7 lines the Mg(2+) pocket. Lys-14 serves as a coordination point for ATP. Arg-88 is a binding site for substrate. The Proton donor/acceptor role is filled by Asp-145. Residues 205-209 (HLGNG), 279-281 (DFR), and 327-331 (GIGEN) contribute to the ATP site. Residue Glu-381 coordinates Mg(2+).

This sequence belongs to the acetokinase family. Homodimer. It depends on Mg(2+) as a cofactor. Mn(2+) serves as cofactor.

It localises to the cytoplasm. It catalyses the reaction acetate + ATP = acetyl phosphate + ADP. The protein operates within metabolic intermediate biosynthesis; acetyl-CoA biosynthesis; acetyl-CoA from acetate: step 1/2. Its function is as follows. Catalyzes the formation of acetyl phosphate from acetate and ATP. Can also catalyze the reverse reaction. The protein is Acetate kinase of Campylobacter jejuni subsp. jejuni serotype O:6 (strain 81116 / NCTC 11828).